Here is a 496-residue protein sequence, read N- to C-terminus: UDP-glycosyltransferase 84A2 (496 aa).

Residue His23 is the Proton acceptor of the active site. His23 contributes to the an anthocyanidin binding site. UDP-alpha-D-glucose contacts are provided by Gln352, His367, Trp370, Asn371, Ser372, and Glu375. Gly390 is an an anthocyanidin binding site. Residues Asp391 and Gln392 each coordinate UDP-alpha-D-glucose.

This sequence belongs to the UDP-glycosyltransferase family. As to expression, expressed in roots, cotyledons, leaf veins and trichomes.

It catalyses the reaction (E)-sinapate + UDP-alpha-D-glucose = 1-O-(trans-sinapoyl)-beta-D-glucose + UDP. Functionally, sinapate glucosyltransferase (SGT) required for the biosynthesis of the glucose ester sinapoylglucose and subsequently sinapoylmalate and sinapoylcholine. Is the major SGT activity in plant. Plays an important role in sinapoylation of anthocyanins. Sinapoylglucose produced by UGT84A2 is a significant source of sinapoyl moieties for anthocyanins. Indole-3-butyric acid (IBA)-specific glucosyltransferase that catalyzes the glucosylation of the auxin IBA, but not indole-3-acetic acid (IAA). May be involved in flowering regulation through IBA-mediated transcriptional repression of the auxin-response factors ARF6 and ARF8 and downstream flowering pathway genes. Can glucosylate the phytotoxic xenobiotic compound 2,4,5-trichlorophenol (TCP). In Arabidopsis thaliana (Mouse-ear cress), this protein is UDP-glycosyltransferase 84A2.